A 253-amino-acid chain; its full sequence is N-acetylglucosaminyl-phosphatidylinositol de-N-acetylase (253 aa).

A helical transmembrane segment spans residues 3-23; the sequence is VAAPLLCLAAAVLVWGVLWVW. At 24-253 the chain is on the cytoplasmic side; it reads GSWERMTRPE…YMRINSLNFL (230 aa).

Belongs to the PIGL family.

It localises to the endoplasmic reticulum membrane. The catalysed reaction is a 6-(N-acetyl-alpha-D-glucosaminyl)-1-(1,2-diacyl-sn-glycero-3-phospho)-1D-myo-inositol + H2O = a 6-(alpha-D-glucosaminyl)-1-(1,2-diacyl-sn-glycero-3-phospho)-1D-myo-inositol + acetate. It functions in the pathway glycolipid biosynthesis; glycosylphosphatidylinositol-anchor biosynthesis. Its function is as follows. Catalyzes the second step of glycosylphosphatidylinositol (GPI) biosynthesis, which is the de-N-acetylation of N-acetylglucosaminyl-phosphatidylinositol. This Bos taurus (Bovine) protein is N-acetylglucosaminyl-phosphatidylinositol de-N-acetylase (PIGL).